Reading from the N-terminus, the 604-residue chain is Uptake hydrogenase large subunit (604 aa).

Residues Cys76, Cys79, Cys583, and Cys586 each coordinate Ni(2+).

This sequence belongs to the [NiFe]/[NiFeSe] hydrogenase large subunit family. In terms of assembly, heterodimer of a large and a small subunit. Requires Ni(2+) as cofactor.

The protein localises to the cell membrane. The catalysed reaction is H2 + A = AH2. This enzyme recycles the H(2) produced by nitrogenase to increase the production of ATP and to protect nitrogenase against inhibition or damage by O(2) under carbon- or phosphate-limited conditions. The chain is Uptake hydrogenase large subunit (hoxL) from Afipia carboxidovorans (strain ATCC 49405 / DSM 1227 / KCTC 32145 / OM5) (Oligotropha carboxidovorans).